Here is a 154-residue protein sequence, read N- to C-terminus: Small ribosomal subunit protein bS6 (154 aa).

Residues 97 to 154 (DSEPSAMMQKRDRDDRKDRERGRRRDDEGFGGGGGFGGDRGDRGDRGDRGERSFGGEG) are disordered. 2 stretches are compositionally biased toward basic and acidic residues: residues 105–124 (QKRD…RDDE) and 135–154 (DRGD…GGEG).

This sequence belongs to the bacterial ribosomal protein bS6 family.

In terms of biological role, binds together with bS18 to 16S ribosomal RNA. In Methylobacterium radiotolerans (strain ATCC 27329 / DSM 1819 / JCM 2831 / NBRC 15690 / NCIMB 10815 / 0-1), this protein is Small ribosomal subunit protein bS6.